The sequence spans 528 residues: GMP synthase [glutamine-hydrolyzing] (528 aa).

Residues 13-204 (AIVILDFGSQ…VYDICSCEPD (192 aa)) enclose the Glutamine amidotransferase type-1 domain. Cys90 serves as the catalytic Nucleophile. Catalysis depends on residues His178 and Glu180. A GMPS ATP-PPase domain is found at 205–403 (WTTNLFIDEA…LGLPDEIVRR (199 aa)). 232–238 (SGGVDSS) contacts ATP.

Homodimer.

The catalysed reaction is XMP + L-glutamine + ATP + H2O = GMP + L-glutamate + AMP + diphosphate + 2 H(+). It functions in the pathway purine metabolism; GMP biosynthesis; GMP from XMP (L-Gln route): step 1/1. Functionally, catalyzes the synthesis of GMP from XMP. This chain is GMP synthase [glutamine-hydrolyzing], found in Prochlorococcus marinus (strain NATL1A).